A 383-amino-acid chain; its full sequence is Anhydro-N-acetylmuramic acid kinase (383 aa).

Residue 9–16 (GTSLDGID) participates in ATP binding.

This sequence belongs to the anhydro-N-acetylmuramic acid kinase family.

It catalyses the reaction 1,6-anhydro-N-acetyl-beta-muramate + ATP + H2O = N-acetyl-D-muramate 6-phosphate + ADP + H(+). The protein operates within amino-sugar metabolism; 1,6-anhydro-N-acetylmuramate degradation. It functions in the pathway cell wall biogenesis; peptidoglycan recycling. Catalyzes the specific phosphorylation of 1,6-anhydro-N-acetylmuramic acid (anhMurNAc) with the simultaneous cleavage of the 1,6-anhydro ring, generating MurNAc-6-P. Is required for the utilization of anhMurNAc either imported from the medium or derived from its own cell wall murein, and thus plays a role in cell wall recycling. This Bacillus cereus (strain ATCC 10987 / NRS 248) protein is Anhydro-N-acetylmuramic acid kinase.